Consider the following 33-residue polypeptide: Brevinin-2DYa (33 aa).

A disulfide bridge links C27 with C33.

Expressed by the skin glands.

It localises to the secreted. Functionally, antimicrobial peptide. The sequence is that of Brevinin-2DYa from Rana dybowskii (Dybovsky's frog).